We begin with the raw amino-acid sequence, 216 residues long: Adenylate kinase (216 aa).

Residue G10 to T15 coordinates ATP. The segment at S30–V59 is NMP. Residues T31, R36, A57–V59, G85–R88, and Q92 each bind AMP. The interval G126–D163 is LID. ATP is bound at residue R127. C130 and C133 together coordinate Zn(2+). Position 136–137 (T136–Y137) interacts with ATP. Zn(2+)-binding residues include C150 and C153. Residues R160 and R171 each contribute to the AMP site. ATP is bound at residue Q199.

This sequence belongs to the adenylate kinase family. Monomer.

Its subcellular location is the cytoplasm. It carries out the reaction AMP + ATP = 2 ADP. Its pathway is purine metabolism; AMP biosynthesis via salvage pathway; AMP from ADP: step 1/1. Functionally, catalyzes the reversible transfer of the terminal phosphate group between ATP and AMP. Plays an important role in cellular energy homeostasis and in adenine nucleotide metabolism. This Bacillus cereus (strain ATCC 10987 / NRS 248) protein is Adenylate kinase.